The following is a 362-amino-acid chain: tRNA-specific 2-thiouridylase MnmA (362 aa).

ATP is bound by residues glycine 9 to serine 16 and methionine 35. The tract at residues asparagine 95 to aspartate 97 is interaction with target base in tRNA. The active-site Nucleophile is the cysteine 100. An intrachain disulfide couples cysteine 100 to cysteine 196. Glycine 124 contacts ATP. The interaction with tRNA stretch occupies residues lysine 146–glutamine 148. Cysteine 196 acts as the Cysteine persulfide intermediate in catalysis. The segment at arginine 308–tyrosine 309 is interaction with tRNA.

The protein belongs to the MnmA/TRMU family.

The protein localises to the cytoplasm. It catalyses the reaction S-sulfanyl-L-cysteinyl-[protein] + uridine(34) in tRNA + AH2 + ATP = 2-thiouridine(34) in tRNA + L-cysteinyl-[protein] + A + AMP + diphosphate + H(+). In terms of biological role, catalyzes the 2-thiolation of uridine at the wobble position (U34) of tRNA, leading to the formation of s(2)U34. The sequence is that of tRNA-specific 2-thiouridylase MnmA from Nitrosomonas europaea (strain ATCC 19718 / CIP 103999 / KCTC 2705 / NBRC 14298).